The sequence spans 710 residues: Solute carrier organic anion transporter family member 3A1 (710 aa).

Position 1 is an N-acetylmethionine (Met-1). Over residues 1 to 15 the composition is skewed to gly residues; sequence MQGKKPGGSSGGGRS. The segment at 1 to 25 is disordered; sequence MQGKKPGGSSGGGRSGELQGDEAQR. Residues 1 to 40 are Cytoplasmic-facing; the sequence is MQGKKPGGSSGGGRSGELQGDEAQRNKKKKKKVSCFSNIK. A helical membrane pass occupies residues 41 to 60; sequence IFLVSECALMLAQGTVGAYL. Topologically, residues 61 to 79 are extracellular; it reads VSVLTTLERRFNLQSADVG. Residues 80–100 traverse the membrane as a helical segment; the sequence is VIASSFEIGNLALILFVSYFG. The Cytoplasmic segment spans residues 101 to 106; the sequence is ARGHRP. The chain crosses the membrane as a helical span at residues 107–131; sequence RLIGCGGIVMALGALLSALPEFLTH. At 132–174 the chain is on the extracellular side; sequence QYKYEAGEIRWGAEGRDVCAANGSGGDEGPDPDLICRNRTATN. 2 N-linked (GlcNAc...) asparagine glycosylation sites follow: Asn-153 and Asn-169. The chain crosses the membrane as a helical span at residues 175-203; it reads MMYLLLIGAQVLLGIGATPVQPLGVSYID. Residues 204–222 are Cytoplasmic-facing; sequence DHVRRKDSSLYIGILFTML. A helical membrane pass occupies residues 223 to 243; it reads VFGPACGFILGSFCTKIYVDA. The Extracellular segment spans residues 244–261; that stretch reads VFIDTSNLDITPDDPRWI. Residues 262–286 form a helical membrane-spanning segment; that stretch reads GAWWGGFLLCGALLFFSSLLMFGFP. Topologically, residues 287–344 are cytoplasmic; the sequence is QSLPPHSEPAMESEQAMLSEREYERPKPSNGVLRHPLEPDSSASCFQQLRVIPKVTKH. The chain crosses the membrane as a helical span at residues 345 to 366; it reads LLSNPVFTCIILAACMEIAVVA. Residues 367 to 386 are Extracellular-facing; it reads GFAAFLGKYLEQQFNLTTSS. A glycan (N-linked (GlcNAc...) asparagine) is linked at Asn-381. The chain crosses the membrane as a helical span at residues 387 to 410; the sequence is ANQLLGMTAIPCACLGIFLGGLLV. Residues 411–414 are Cytoplasmic-facing; sequence KKLS. The helical transmembrane segment at 415–438 threads the bilayer; the sequence is LSALGAIRMAMLVNLVSTACYVSF. The Extracellular segment spans residues 439–539; sequence LFLGCDTGPV…PGCQEAFLTF (101 aa). An N-linked (GlcNAc...) asparagine glycan is attached at Asn-457. Residues 465-513 enclose the Kazal-like domain; it reads LDPYSPCNNNCECQTDSFTPVCGADGITYLSACFAGCNSTNLTGCACLT. 3 disulfides stabilise this stretch: Cys-471–Cys-501, Cys-477–Cys-497, and Cys-486–Cys-511. N-linked (GlcNAc...) asparagine glycosylation is found at Asn-502, Asn-505, and Asn-519. Residues 540-562 form a helical membrane-spanning segment; the sequence is LCVMCICSLIGAMAQTPSVIILI. Over 563–571 the chain is Cytoplasmic; it reads RTVSPELKS. Residues 572 to 597 traverse the membrane as a helical segment; the sequence is YALGVLFLLLRLLGFIPPPLIFGAGI. The Extracellular segment spans residues 598–630; the sequence is DSTCLFWSTFCGEQGACVLYDNVVYRYLYVSIA. A helical membrane pass occupies residues 631 to 648; that stretch reads IALKSFAFILYTTTWQCL. The Cytoplasmic segment spans residues 649–705; it reads RKNYKRYIKNHEGGLSTSEFFASTLTLDNLGRDPVPANQTHRTKFIYNLEDHEWCEN.

This sequence belongs to the organo anion transporter (TC 2.A.60) family. Generally the expression of isoform 1 is higher than that of isoform 2. As to expression, expressed in placental trophoblasts. Expressed in pancreas, kidney, liver, lung, brain, heart, cerebellum, peripheral blood leukocyte, colon, small intestine, ovary, testis, prostate, thyroid, thymus and spleen. Expressed in fetal brain, heart, kidney, liver, lung, skeletal muscle, spleen and pancreas. In testis, detected in spermatogonia at different stages and absent from Sertoli cells. Expressed in the choroid plexus epithelium, at the basolateral membrane. In brain, also very abundant in the gray matter of the frontal cortex, but not associated with neuronal cell bodies. Not detected in the white matter. In terms of tissue distribution, expressed in heart, brain, cerebellum, testis, lung, thyroid, spoleen and liver. In testis, primarily localized to the basal membrane of Sertoli cells and weakly expressed within the tubules. In testis, also present in spermatogonia at different stages. In brain, expressed in the choroid plexus epithelium, at the apical membrane as well as in the subapical intracellular vesicular compartments. In brain, also associated with neuronal bodies and axons in both the gray and the white matters of the frontal cortex.

It localises to the basolateral cell membrane. The protein resides in the apical cell membrane. It is found in the basal cell membrane. The enzyme catalyses L-thyroxine(out) = L-thyroxine(in). It catalyses the reaction prostaglandin E1(out) = prostaglandin E1(in). It carries out the reaction prostaglandin E2(out) = prostaglandin E2(in). The catalysed reaction is prostaglandin F2alpha(out) = prostaglandin F2alpha(in). The enzyme catalyses (5Z,8Z,11Z,14Z)-eicosatetraenoate(out) = (5Z,8Z,11Z,14Z)-eicosatetraenoate(in). It catalyses the reaction taurocholate(out) = taurocholate(in). It carries out the reaction glycocholate(out) = glycocholate(in). The catalysed reaction is estrone 3-sulfate(out) = estrone 3-sulfate(in). The enzyme catalyses argipressin(out) = argipressin(in). Its activity is regulated as follows. Stimulated by extracellular acidic pH. Functionally, putative organic anion antiporter with apparent broad substrate specificity. Recognizes various substrates including thyroid hormone L-thyroxine, prostanoids such as prostaglandin E1 and E2, bile acids such as taurocholate, glycolate and glycochenodeoxycholate and peptide hormones such as L-arginine vasopressin, likely operating in a tissue-specific manner. The transport mechanism, its electrogenicity and potential tissue-specific counterions remain to be elucidated. The sequence is that of Solute carrier organic anion transporter family member 3A1 (SLCO3A1) from Homo sapiens (Human).